The following is a 502-amino-acid chain: Hexose transporter 1 (502 aa).

Residues 1-26 (MKKSSKEISSSQSLKNGGSDHFFNTS) lie on the Cytoplasmic side of the membrane. A helical transmembrane segment spans residues 27–47 (LMYVLAACLASFIFGYQVSVL). Residues 48-76 (NTIKNFIVIEFGWCTGNKVECDDSTLKSS) are Extracellular-facing. C61 and C68 are joined by a disulfide. The helical transmembrane segment at 77–97 (FLLASVFIGAVVGSGFSGYLV) threads the bilayer. Residues 98–102 (QHGRR) lie on the Cytoplasmic side of the membrane. A helical transmembrane segment spans residues 103 to 123 (FSLLVIYNFFILVSILTSITH). The Extracellular segment spans residues 124-132 (HFHTILFSR). A helical membrane pass occupies residues 133–153 (LLSGFGIGLITVSVPMYISEM). The Cytoplasmic portion of the chain corresponds to 154-163 (THKDKKGAYG). A helical transmembrane segment spans residues 164–184 (VLHQLFITFGIFVAVLLGMAM). Q167 serves as a coordination point for alpha-D-glucose. Residue Q167 participates in beta-D-glucose binding. At 185-205 (GEAPDAKSVDALGEFQKIWWR) the chain is on the extracellular side. Residues 206-226 (LMFFFPCLISILGIVLLTFFY) traverse the membrane as a helical segment. Topologically, residues 227 to 291 (KEETPYYLFE…RAMQIPSYRN (65 aa)) are cytoplasmic. The helical transmembrane segment at 292 to 312 (VILLGCILSGLQQFTGINVLV) threads the bilayer. The alpha-D-glucose site is built by Q303, Q304, and N309. Position 303 (Q303) interacts with beta-D-glucose. N309 serves as a coordination point for beta-D-glucose. Residues 313-329 (SNSNELYKEFLSNKLIT) are Extracellular-facing. A helical membrane pass occupies residues 330–350 (TLSVIMTVVNFLMTFPAIYIV). N339 serves as a coordination point for beta-D-glucose. Topologically, residues 351–356 (EKLGRK) are cytoplasmic. A helical transmembrane segment spans residues 357–377 (TLLLCGCAGVICAFLPTAIAN). Residues 378 to 390 (QIDSTSAFVKNLS) lie on the Extracellular side of the membrane. A helical membrane pass occupies residues 391–411 (IAATFVMIISFAVSYGPVLWI). Position 410 (W410) interacts with alpha-D-glucose. Residues 412 to 427 (YLHEMFPSEIKDSAAS) lie on the Cytoplasmic side of the membrane. The chain crosses the membrane as a helical span at residues 428–448 (LASLVNWVCAIIVVFPSDIII). Residues 449–453 (KKSPT) are Extracellular-facing. Residues 454–474 (ILFFIFSGMSILSFLFIFFFI) form a helical membrane-spanning segment. The Cytoplasmic segment spans residues 475-502 (KETKGGEIGTSPYITMEERQKHMGKSAV).

The protein belongs to the major facilitator superfamily. Sugar transporter (TC 2.A.1.1) family. Homodimer.

The protein resides in the cell membrane. The enzyme catalyses D-glucose(out) = D-glucose(in). It catalyses the reaction D-fructose(out) = D-fructose(in). The catalysed reaction is D-galactose(in) = D-galactose(out). It carries out the reaction D-mannose(out) = D-mannose(in). The enzyme catalyses D-glucosamine(out) = D-glucosamine(in). It catalyses the reaction D-xylose(out) = D-xylose(in). With respect to regulation, inhibited by compound 3361 (3-O-((undec-10-en)-1-yl)-D-glucose). In terms of biological role, sodium-independent facilitative hexose transporter. Can transport D-glucose and D-fructose. Can transport D-mannose, D-galactose, D-xylose and D-glucosamine. The protein is Hexose transporter 1 of Plasmodium vivax (strain Brazil I).